Here is a 473-residue protein sequence, read N- to C-terminus: 3-isopropylmalate dehydratase large subunit (473 aa).

[4Fe-4S] cluster-binding residues include cysteine 354, cysteine 414, and cysteine 417.

It belongs to the aconitase/IPM isomerase family. LeuC type 1 subfamily. Heterodimer of LeuC and LeuD. The cofactor is [4Fe-4S] cluster.

The catalysed reaction is (2R,3S)-3-isopropylmalate = (2S)-2-isopropylmalate. The protein operates within amino-acid biosynthesis; L-leucine biosynthesis; L-leucine from 3-methyl-2-oxobutanoate: step 2/4. Catalyzes the isomerization between 2-isopropylmalate and 3-isopropylmalate, via the formation of 2-isopropylmaleate. In Mycobacterium ulcerans (strain Agy99), this protein is 3-isopropylmalate dehydratase large subunit.